We begin with the raw amino-acid sequence, 588 residues long: DNA mismatch repair protein MutL (588 aa).

Belongs to the DNA mismatch repair MutL/HexB family.

This protein is involved in the repair of mismatches in DNA. It is required for dam-dependent methyl-directed DNA mismatch repair. May act as a 'molecular matchmaker', a protein that promotes the formation of a stable complex between two or more DNA-binding proteins in an ATP-dependent manner without itself being part of a final effector complex. The sequence is that of DNA mismatch repair protein MutL from Methanocorpusculum labreanum (strain ATCC 43576 / DSM 4855 / Z).